The following is a 251-amino-acid chain: Methionine aminopeptidase (251 aa).

His-79 is a substrate binding site. 3 residues coordinate a divalent metal cation: Asp-96, Asp-107, and His-170. His-177 serves as a coordination point for substrate. A divalent metal cation-binding residues include Glu-204 and Glu-235.

This sequence belongs to the peptidase M24A family. Methionine aminopeptidase type 1 subfamily. In terms of assembly, monomer. It depends on Co(2+) as a cofactor. The cofactor is Zn(2+). Mn(2+) is required as a cofactor. Fe(2+) serves as cofactor.

The enzyme catalyses Release of N-terminal amino acids, preferentially methionine, from peptides and arylamides.. In terms of biological role, removes the N-terminal methionine from nascent proteins. The N-terminal methionine is often cleaved when the second residue in the primary sequence is small and uncharged (Met-Ala-, Cys, Gly, Pro, Ser, Thr, or Val). Requires deformylation of the N(alpha)-formylated initiator methionine before it can be hydrolyzed. The protein is Methionine aminopeptidase of Borreliella burgdorferi (strain ATCC 35210 / DSM 4680 / CIP 102532 / B31) (Borrelia burgdorferi).